Here is a 281-residue protein sequence, read N- to C-terminus: Stomatin-4 (281 aa).

A helical membrane pass occupies residues 28 to 48; that stretch reads WIITIISYLVVLFTLPLSAFF.

This sequence belongs to the band 7/mec-2 family.

It is found in the membrane. The chain is Stomatin-4 (sto-4) from Caenorhabditis elegans.